Consider the following 354-residue polypeptide: Fructose-bisphosphate aldolase (354 aa).

D-glyceraldehyde 3-phosphate is bound at residue Ser50. Asp83 (proton donor) is an active-site residue. The Zn(2+) site is built by His84, Asp105, Glu142, and His198. Gly199 is a binding site for dihydroxyacetone phosphate. Residue His232 participates in Zn(2+) binding. Residues 233–235 (GSS) and 275–278 (NIDT) each bind dihydroxyacetone phosphate.

It belongs to the class II fructose-bisphosphate aldolase family. As to quaternary structure, homodimer. Zn(2+) is required as a cofactor.

It catalyses the reaction beta-D-fructose 1,6-bisphosphate = D-glyceraldehyde 3-phosphate + dihydroxyacetone phosphate. The protein operates within carbohydrate biosynthesis; Calvin cycle. Its pathway is carbohydrate degradation; glycolysis; D-glyceraldehyde 3-phosphate and glycerone phosphate from D-glucose: step 4/4. Activity is stimulated by Fe(2+) in autotrophically grown cells. Functionally, catalyzes the aldol condensation of dihydroxyacetone phosphate (DHAP or glycerone-phosphate) with glyceraldehyde 3-phosphate (G3P) to form fructose 1,6-bisphosphate (FBP) in gluconeogenesis and the reverse reaction in glycolysis. This Xanthobacter flavus protein is Fructose-bisphosphate aldolase.